We begin with the raw amino-acid sequence, 253 residues long: Distal tail protein (253 aa).

Homohexamer.

Its subcellular location is the virion. Forms a 40 Angstroms wide channel at the distal tip of the tail. Remains associated to the tail after DNA ejection. The protein is Distal tail protein of Bacillus phage SPP1 (Bacteriophage SPP1).